Reading from the N-terminus, the 326-residue chain is Ribonuclease H2 subunit A (326 aa).

The segment at 1–47 (MKDDHDAWEPEELVSDNNSSENELQEDQNSSITFLPPSVNKSNPAKS) is disordered. Positions 15–47 (SDNNSSENELQEDQNSSITFLPPSVNKSNPAKS) are enriched in polar residues. Positions 63–286 (PYRLGVDEAG…AKDLLELPSK (224 aa)) constitute an RNase H type-2 domain. Residues D69, E70, and D180 each coordinate a divalent metal cation.

This sequence belongs to the RNase HII family. Eukaryotic subfamily. Mn(2+) serves as cofactor. It depends on Mg(2+) as a cofactor.

The catalysed reaction is Endonucleolytic cleavage to 5'-phosphomonoester.. Endonuclease that specifically degrades the RNA of RNA-DNA hybrids. Participates in DNA replication. This is Ribonuclease H2 subunit A (rnh201) from Schizosaccharomyces pombe (strain 972 / ATCC 24843) (Fission yeast).